A 100-amino-acid chain; its full sequence is Urease subunit gamma (100 aa).

Belongs to the urease gamma subunit family. As to quaternary structure, heterotrimer of UreA (gamma), UreB (beta) and UreC (alpha) subunits. Three heterotrimers associate to form the active enzyme. Post-translationally, although not discussed in the published references, Met-1 is represented in the submitted PDB entries as being modified by either a formyl, a carboxyl, or an acetyl group. The N-terminal is probably N-(dihydroxymethyl)methionine, the hydrated form of N-formylmethionine.

The protein resides in the cytoplasm. The enzyme catalyses urea + 2 H2O + H(+) = hydrogencarbonate + 2 NH4(+). It functions in the pathway nitrogen metabolism; urea degradation; CO(2) and NH(3) from urea (urease route): step 1/1. This Sporosarcina pasteurii (Bacillus pasteurii) protein is Urease subunit gamma.